Here is a 308-residue protein sequence, read N- to C-terminus: Putative cathepsin L 3 (308 aa).

Residues 1 to 21 (MKQFLTAAIVTLLMTAGYYHL) form the signal peptide. A propeptide spans 22-110 (QEDDTNDFER…GASLPEVQLE (89 aa)) (activation peptide). Cystine bridges form between cysteine 129-cysteine 170 and cysteine 254-cysteine 298. Catalysis depends on residues histidine 261 and asparagine 278.

Belongs to the peptidase C1 family.

The protein localises to the secreted. It catalyses the reaction Specificity close to that of papain. As compared to cathepsin B, cathepsin L exhibits higher activity toward protein substrates, but has little activity on Z-Arg-Arg-NHMec, and no peptidyl-dipeptidase activity.. Functionally, may be involved in extracellular digestion. The chain is Putative cathepsin L 3 from Paramecium tetraurelia.